A 262-amino-acid polypeptide reads, in one-letter code: Acyl-[acyl-carrier-protein]--UDP-N-acetylglucosamine O-acyltransferase (262 aa).

This sequence belongs to the transferase hexapeptide repeat family. LpxA subfamily. Homotrimer.

Its subcellular location is the cytoplasm. The catalysed reaction is a (3R)-hydroxyacyl-[ACP] + UDP-N-acetyl-alpha-D-glucosamine = a UDP-3-O-[(3R)-3-hydroxyacyl]-N-acetyl-alpha-D-glucosamine + holo-[ACP]. The protein operates within glycolipid biosynthesis; lipid IV(A) biosynthesis; lipid IV(A) from (3R)-3-hydroxytetradecanoyl-[acyl-carrier-protein] and UDP-N-acetyl-alpha-D-glucosamine: step 1/6. Functionally, involved in the biosynthesis of lipid A, a phosphorylated glycolipid that anchors the lipopolysaccharide to the outer membrane of the cell. This chain is Acyl-[acyl-carrier-protein]--UDP-N-acetylglucosamine O-acyltransferase, found in Vibrio parahaemolyticus serotype O3:K6 (strain RIMD 2210633).